We begin with the raw amino-acid sequence, 246 residues long: MFPDIRFIVGIIGSVACMLLYSAPILTFKRVIKKASVEEFSCIPYILALFSCLTYSWYGFPVVSYGWENMTVCSISSLGVLFEGTFISIYVWFAPRGKKKQVMLMASLILAVFCMTVFFSSFSIHNHHIRKVFVGSVGLVSSISMYGSPLVAMKQVIRTKSVEFMPFYLSLFTLFTSLTWMAYGVIGRDPFIATPNCIGSIMGILQLVVYCIYSKCKEAPKVLHDIEQANVVKIPTSHVDTKGHNP.

Residues 1–6 are Extracellular-facing; it reads MFPDIR. The helical transmembrane segment at 7 to 27 threads the bilayer; sequence FIVGIIGSVACMLLYSAPILT. In terms of domain architecture, MtN3/slv 1 spans 7 to 96; it reads FIVGIIGSVA…ISIYVWFAPR (90 aa). Residues 28-42 are Cytoplasmic-facing; sequence FKRVIKKASVEEFSC. Residues 43-63 traverse the membrane as a helical segment; sequence IPYILALFSCLTYSWYGFPVV. The Extracellular segment spans residues 64-74; the sequence is SYGWENMTVCS. N69 carries an N-linked (GlcNAc...) asparagine glycan. Residues 75 to 95 traverse the membrane as a helical segment; sequence ISSLGVLFEGTFISIYVWFAP. Topologically, residues 96–101 are cytoplasmic; the sequence is RGKKKQ. A helical membrane pass occupies residues 102–122; sequence VMLMASLILAVFCMTVFFSSF. Over 123 to 131 the chain is Extracellular; it reads SIHNHHIRK. The chain crosses the membrane as a helical span at residues 132–152; that stretch reads VFVGSVGLVSSISMYGSPLVA. In terms of domain architecture, MtN3/slv 2 spans 133-217; sequence FVGSVGLVSS…VVYCIYSKCK (85 aa). The Cytoplasmic segment spans residues 153–166; the sequence is MKQVIRTKSVEFMP. A helical transmembrane segment spans residues 167–187; that stretch reads FYLSLFTLFTSLTWMAYGVIG. Over 188–191 the chain is Extracellular; that stretch reads RDPF. The chain crosses the membrane as a helical span at residues 192 to 212; it reads IATPNCIGSIMGILQLVVYCI. The Cytoplasmic portion of the chain corresponds to 213 to 246; the sequence is YSKCKEAPKVLHDIEQANVVKIPTSHVDTKGHNP.

This sequence belongs to the SWEET sugar transporter family. As to quaternary structure, forms homooligomers and/or heterooligomers.

It localises to the cell membrane. In terms of biological role, mediates both low-affinity uptake and efflux of sugar across the plasma membrane. The protein is Bidirectional sugar transporter SWEET3a (SWEET3A) of Oryza sativa subsp. japonica (Rice).